The chain runs to 261 residues: Putative methyltransferase MJ0046 (261 aa).

The protein belongs to the methyltransferase superfamily.

The polypeptide is Putative methyltransferase MJ0046 (Methanocaldococcus jannaschii (strain ATCC 43067 / DSM 2661 / JAL-1 / JCM 10045 / NBRC 100440) (Methanococcus jannaschii)).